Consider the following 494-residue polypeptide: Glycerol kinase (494 aa).

Threonine 12 is a binding site for ADP. 3 residues coordinate ATP: threonine 12, threonine 13, and serine 14. Threonine 12 contributes to the sn-glycerol 3-phosphate binding site. Arginine 16 is a binding site for ADP. Sn-glycerol 3-phosphate is bound by residues arginine 82, glutamate 83, tyrosine 134, and aspartate 244. Residues arginine 82, glutamate 83, tyrosine 134, aspartate 244, and glutamine 245 each coordinate glycerol. Threonine 266 and glycine 309 together coordinate ADP. Residues threonine 266, glycine 309, glutamine 313, and glycine 410 each contribute to the ATP site. Residues glycine 410 and asparagine 414 each contribute to the ADP site.

Belongs to the FGGY kinase family. As to quaternary structure, homotetramer and homodimer (in equilibrium).

It carries out the reaction glycerol + ATP = sn-glycerol 3-phosphate + ADP + H(+). The protein operates within polyol metabolism; glycerol degradation via glycerol kinase pathway; sn-glycerol 3-phosphate from glycerol: step 1/1. Its activity is regulated as follows. Activated by phosphorylation and inhibited by fructose 1,6-bisphosphate (FBP). Its function is as follows. Key enzyme in the regulation of glycerol uptake and metabolism. Catalyzes the phosphorylation of glycerol to yield sn-glycerol 3-phosphate. This Desulfitobacterium hafniense (strain DSM 10664 / DCB-2) protein is Glycerol kinase.